The primary structure comprises 336 residues: 3-hydroxyisobutyrate dehydrogenase, mitochondrial (336 aa).

Residues 1–36 constitute a mitochondrion transit peptide; that stretch reads MAASLRLRGAASGLRYWSRRQPPAVASLAAVCSRSM. 40–69 contacts NAD(+); that stretch reads TPVGFIGVGNMGNPMAKNLMKHGYPLIIYD. Lys-60 and Lys-76 each carry N6-acetyllysine; alternate. Residues Lys-60 and Lys-76 each carry the N6-succinyllysine; alternate modification. Lys-95 bears the N6-succinyllysine mark. Residues 103–104 and Asn-108 each bind NAD(+); that span reads LP. Lys-121 carries the post-translational modification N6-acetyllysine. Thr-134 contributes to the NAD(+) binding site. N6-succinyllysine is present on Lys-141. Residue Lys-145 is modified to N6-acetyllysine. At Lys-149 the chain carries N6-acetyllysine; alternate. At Lys-149 the chain carries N6-succinyllysine; alternate. The active site involves Lys-209. Residues Lys-238 and Lys-242 each carry the N6-acetyllysine; alternate modification. N6-succinyllysine; alternate is present on residues Lys-238 and Lys-242. Lys-284 serves as a coordination point for NAD(+). Lys-297 bears the N6-succinyllysine mark. The residue at position 321 (Lys-321) is an N6-acetyllysine; alternate. Position 321 is an N6-succinyllysine; alternate (Lys-321).

Belongs to the HIBADH-related family. 3-hydroxyisobutyrate dehydrogenase subfamily. Homodimer.

Its subcellular location is the mitochondrion. It catalyses the reaction 3-hydroxy-2-methylpropanoate + NAD(+) = 2-methyl-3-oxopropanoate + NADH + H(+). Its pathway is amino-acid degradation; L-valine degradation. This is 3-hydroxyisobutyrate dehydrogenase, mitochondrial (HIBADH) from Bos taurus (Bovine).